A 106-amino-acid polypeptide reads, in one-letter code: UPF0145 protein APJL_0492 (106 aa).

The protein belongs to the UPF0145 family.

The polypeptide is UPF0145 protein APJL_0492 (Actinobacillus pleuropneumoniae serotype 3 (strain JL03)).